The sequence spans 581 residues: Myoneurin (581 aa).

Positions 24-89 (CDCTIVIGEF…IYTGTLNLDS (66 aa)) constitute a BTB domain. Positions 167–193 (PKQGALAKKSSQTKKKKKAFNSQKTGQ) are disordered. 2 short sequence motifs (nuclear localization signal) span residues 174–190 (KKSS…NSQK) and 256–261 (KRKRGK). Phosphoserine is present on serine 288. C2H2-type zinc fingers lie at residues 301–323 (PMCN…MRIH), 329–351 (YVCH…VRTH), 357–380 (YKCE…RMHH), 386–408 (YKCD…ARKH), 414–436 (YVCD…VRRH), 442–464 (YVCD…SRKH), and 470–493 (FICE…TKVH).

It belongs to the krueppel C2H2-type zinc-finger protein family.

Its subcellular location is the nucleus. In Bos taurus (Bovine), this protein is Myoneurin (MYNN).